Consider the following 397-residue polypeptide: Elongation factor Tu 1 (397 aa).

Positions K10 to V206 constitute a tr-type G domain. The G1 stretch occupies residues G19 to T26. G19–T26 serves as a coordination point for GTP. Position 26 (T26) interacts with Mg(2+). Positions G61–S65 are G2. The interval D82–G85 is G3. Residues D82 to H86 and N137 to D140 contribute to the GTP site. The interval N137–D140 is G4. The interval S175 to L177 is G5.

This sequence belongs to the TRAFAC class translation factor GTPase superfamily. Classic translation factor GTPase family. EF-Tu/EF-1A subfamily. As to quaternary structure, monomer.

The protein resides in the cytoplasm. The catalysed reaction is GTP + H2O = GDP + phosphate + H(+). In terms of biological role, GTP hydrolase that promotes the GTP-dependent binding of aminoacyl-tRNA to the A-site of ribosomes during protein biosynthesis. This Alkaliphilus metalliredigens (strain QYMF) protein is Elongation factor Tu 1.